We begin with the raw amino-acid sequence, 336 residues long: Glycerol-3-phosphate dehydrogenase [NAD(P)+] (336 aa).

Ser13, Trp14, Arg34, and Lys108 together coordinate NADPH. Residues Lys108, Gly138, and Ser140 each coordinate sn-glycerol 3-phosphate. Ala142 contributes to the NADPH binding site. Residues Lys193, Asp246, Ser256, Arg257, and Asn258 each coordinate sn-glycerol 3-phosphate. The active-site Proton acceptor is the Lys193. NADPH is bound at residue Arg257. The NADPH site is built by Val281 and Glu283.

Belongs to the NAD-dependent glycerol-3-phosphate dehydrogenase family.

The protein resides in the cytoplasm. The enzyme catalyses sn-glycerol 3-phosphate + NAD(+) = dihydroxyacetone phosphate + NADH + H(+). It carries out the reaction sn-glycerol 3-phosphate + NADP(+) = dihydroxyacetone phosphate + NADPH + H(+). It participates in membrane lipid metabolism; glycerophospholipid metabolism. Catalyzes the reduction of the glycolytic intermediate dihydroxyacetone phosphate (DHAP) to sn-glycerol 3-phosphate (G3P), the key precursor for phospholipid synthesis. This chain is Glycerol-3-phosphate dehydrogenase [NAD(P)+], found in Carboxydothermus hydrogenoformans (strain ATCC BAA-161 / DSM 6008 / Z-2901).